A 315-amino-acid chain; its full sequence is Putative peptide transport system permease protein BMEII0209 (315 aa).

The next 6 helical transmembrane spans lie at 13–33, 102–122, 136–156, 178–198, 238–258, and 287–307; these read AIPV…LLPG, LALL…VVAA, LALL…VILF, WLRS…GYLA, VSVL…SVVI, and MLFL…LYTI. The ABC transmembrane type-1 domain occupies 96–305; that stretch reads LPVTISLALL…AINVLVDILY (210 aa).

The protein belongs to the binding-protein-dependent transport system permease family. In terms of assembly, the complex is composed of two ATP-binding proteins (BMEII0205 and BMEII0206), two transmembrane proteins (BMEII0207/BMEII0208 and BMEII0209) and a solute-binding protein (BMEII0210).

It localises to the cell inner membrane. Probably part of an ABC transporter complex that could be involved in peptide import. Probably responsible for the translocation of the substrate across the membrane. In Brucella melitensis biotype 1 (strain ATCC 23456 / CCUG 17765 / NCTC 10094 / 16M), this protein is Putative peptide transport system permease protein BMEII0209.